The primary structure comprises 568 residues: C6 finger domain transcription factor BOA13 (568 aa).

A DNA-binding region (zn(2)-C6 fungal-type) is located at residues 14–41 (CNECHASKVRCSGERTGCRRCVYNQQKC). Disordered regions lie at residues 92 to 114 (EANGNDLNSKPNDVPVESSEGIT), 207 to 278 (ATSS…HHNH), and 467 to 490 (RSRSLSTPSPRNTPSTSNSPFSNP). Basic and acidic residues predominate over residues 242–259 (HSDLSEKQAQHAQNDLRW). Polar residues predominate over residues 260–274 (RSQSQSYKRPTISTQ). Residues 470 to 490 (SLSTPSPRNTPSTSNSPFSNP) show a composition bias toward low complexity.

It is found in the nucleus. Transcription factor that probably regulates the gene clusters that mediates the biosynthesis of botcinin acid and its botcinin derivatives, acetate-derived polyketides that contribute to virulence when combined with the sesquiterpene botrydial. Botcinin acid and its derivatives have been shown to induce chlorosis and necrosis during host plant infection, but also have antifungal activities. The chain is C6 finger domain transcription factor BOA13 from Botryotinia fuckeliana (strain B05.10) (Noble rot fungus).